A 136-amino-acid polypeptide reads, in one-letter code: Large ribosomal subunit protein uL16c (136 aa).

This sequence belongs to the universal ribosomal protein uL16 family. Part of the 50S ribosomal subunit.

It is found in the plastid. The protein localises to the chloroplast. This Chloranthus spicatus (Chulantree) protein is Large ribosomal subunit protein uL16c.